A 390-amino-acid polypeptide reads, in one-letter code: Two-component response regulator ORR29 (390 aa).

The Response regulatory domain maps to 13 to 130 (SAMVIDEDKC…TIKNLWQYVD (118 aa)). The residue at position 65 (Asp-65) is a 4-aspartylphosphate. The myb-like GARP DNA-binding region spans 169–226 (KKYYLMWTPHLQKKFLHALQILGKDASPKNIKKIMGVDNIDCRQIAAHLQKHRLRLTK). Disordered stretches follow at residues 233 to 271 (FTTDTSKDESNSRIGPAESHHVCRNASTLQPRSNTQPTE) and 303 to 339 (SKHSSDPSGDEDEQVVVGGDQDGCANEANDIDSSGDH). Over residues 257-271 (NASTLQPRSNTQPTE) the composition is skewed to polar residues.

This sequence belongs to the ARR family. Type-B subfamily. Two-component system major event consists of a His-to-Asp phosphorelay between a sensor histidine kinase (HK) and a response regulator (RR). In plants, the His-to-Asp phosphorelay involves an additional intermediate named Histidine-containing phosphotransfer protein (HPt). This multistep phosphorelay consists of a His-Asp-His-Asp sequential transfer of a phosphate group between first a His and an Asp of the HK protein, followed by the transfer to a conserved His of the HPt protein and finally the transfer to an Asp in the receiver domain of the RR protein.

It localises to the cytoplasm. The protein resides in the cytosol. The protein localises to the nucleus. Functionally, transcriptional activator that binds specific DNA sequence. Functions as a response regulator involved in His-to-Asp phosphorelay signal transduction system. Phosphorylation of the Asp residue in the receiver domain activates the ability of the protein to promote the transcription of target genes. May directly activate some type-A response regulators in response to cytokinins. Functions as a response regulator in response to cytokinins. In Oryza sativa subsp. japonica (Rice), this protein is Two-component response regulator ORR29.